The primary structure comprises 126 residues: Adult-specific rigid cuticular protein 12.4 (126 aa).

A Chitin-binding type R&amp;R domain is found at 9–87 (GGAYNFGFNT…AMAALAPKAP (79 aa)).

Functionally, component of the rigid cuticle of the spider. This chain is Adult-specific rigid cuticular protein 12.4, found in Araneus diadematus (European garden spider).